Consider the following 1018-residue polypeptide: Pleckstrin homology domain-containing family M member 2 (1018 aa).

The residue at position 1 (Met-1) is an N-acetylmethionine. The interaction with KIF5B stretch occupies residues 1-289 (MEPREVKDRI…PDQPDACTEL (289 aa)). The RUN domain occupies 36–158 (RNHDKVLQRL…IRFDLDLDAP (123 aa)). Disordered regions lie at residues 210–367 (SAIA…SSEL), 407–440 (TWCS…SEGL), 452–520 (ESPS…DSQL), 526–545 (EPLV…EPGT), and 555–583 (DQPS…THPS). Positions 230–245 (STASDLTSSKTSTKSP) are enriched in low complexity. The segment covering 258–270 (ETASSDTTPVHTT) has biased composition (polar residues). The span at 294 to 306 (VTKKKKIGKKKKT) shows a compositional bias: basic residues. 2 stretches are compositionally biased toward polar residues: residues 316-325 (HPTSSQQKCG) and 347-367 (VLAS…SSEL). A Phosphoserine modification is found at Ser-423. Residues 770-872 (TITKEGMLHY…WMQHLCQAVS (103 aa)) enclose the PH domain.

As to quaternary structure, interacts with KLC2 (via TPR repeats). Interacts with KIF5B. Interacts with BORCS5. Interacts (via RUN domain) with ARL8B (GTP-bound form); PLEKHM1 and PLEKHM2 compete for interaction with ARL8B. Interacts with ARL8A.

The protein resides in the cytoplasm. It is found in the lysosome membrane. Plays a role in lysosomes movement and localization at the cell periphery acting as an effector of ARL8B. Required for ARL8B to exert its effects on lysosome location, recruits kinesin-1 to lysosomes and hence direct their movement toward microtubule plus ends. Binding to ARL8B provides a link from lysosomal membranes to plus-end-directed motility. Critical factor involved in NK cell-mediated cytotoxicity. Drives the polarization of cytolytic granules and microtubule-organizing centers (MTOCs) toward the immune synapse between effector NK lymphocytes and target cells. Required for maintenance of the Golgi apparatus organization. May play a role in membrane tubulation. This is Pleckstrin homology domain-containing family M member 2 from Mus musculus (Mouse).